The sequence spans 511 residues: Cobyric acid synthase (511 aa).

Residues 251–443 (LLDIAIICLP…IHGIFDNDVF (193 aa)) enclose the GATase cobBQ-type domain. Residue cysteine 332 is the Nucleophile of the active site. Histidine 435 is an active-site residue.

The protein belongs to the CobB/CobQ family. CobQ subfamily.

The protein operates within cofactor biosynthesis; adenosylcobalamin biosynthesis. Its function is as follows. Catalyzes amidations at positions B, D, E, and G on adenosylcobyrinic A,C-diamide. NH(2) groups are provided by glutamine, and one molecule of ATP is hydrogenolyzed for each amidation. The chain is Cobyric acid synthase from Listeria monocytogenes serovar 1/2a (strain ATCC BAA-679 / EGD-e).